We begin with the raw amino-acid sequence, 151 residues long: MIKTPLPKQETLDQKWYVVDAADQRLGRLASEVAKVLRGKNKAEYTPHMDTGDFVIVVNAEKVVVTGRKPEQKLYRRHSGRPGGMKVETFNQLQDRIPERIIEKAVKGMLPKNALGRRLFTKLKVYAGTEHPHAAQQPEVLTINTIPGGDN.

This sequence belongs to the universal ribosomal protein uL13 family. In terms of assembly, part of the 50S ribosomal subunit.

Its function is as follows. This protein is one of the early assembly proteins of the 50S ribosomal subunit, although it is not seen to bind rRNA by itself. It is important during the early stages of 50S assembly. This chain is Large ribosomal subunit protein uL13, found in Picosynechococcus sp. (strain ATCC 27264 / PCC 7002 / PR-6) (Agmenellum quadruplicatum).